The following is a 213-amino-acid chain: Imidazole glycerol phosphate synthase subunit HisH 1 (213 aa).

The region spanning 3–213 is the Glutamine amidotransferase type-1 domain; that stretch reads SVSILDYGVG…LSIIQQFLQI (211 aa). Cys81 acts as the Nucleophile in catalysis. Active-site residues include His195 and Glu197.

In terms of assembly, heterodimer of HisH and HisF.

The protein resides in the cytoplasm. It catalyses the reaction 5-[(5-phospho-1-deoxy-D-ribulos-1-ylimino)methylamino]-1-(5-phospho-beta-D-ribosyl)imidazole-4-carboxamide + L-glutamine = D-erythro-1-(imidazol-4-yl)glycerol 3-phosphate + 5-amino-1-(5-phospho-beta-D-ribosyl)imidazole-4-carboxamide + L-glutamate + H(+). It carries out the reaction L-glutamine + H2O = L-glutamate + NH4(+). It functions in the pathway amino-acid biosynthesis; L-histidine biosynthesis; L-histidine from 5-phospho-alpha-D-ribose 1-diphosphate: step 5/9. IGPS catalyzes the conversion of PRFAR and glutamine to IGP, AICAR and glutamate. The HisH subunit provides the glutamine amidotransferase activity that produces the ammonia necessary to HisF for the synthesis of IGP and AICAR. The chain is Imidazole glycerol phosphate synthase subunit HisH 1 from Legionella pneumophila (strain Lens).